A 273-amino-acid chain; its full sequence is Hydroxyethylthiazole kinase (273 aa).

Substrate is bound at residue methionine 49. ATP is bound by residues lysine 125 and threonine 171. Glycine 198 lines the substrate pocket.

This sequence belongs to the Thz kinase family. Requires Mg(2+) as cofactor.

It carries out the reaction 5-(2-hydroxyethyl)-4-methylthiazole + ATP = 4-methyl-5-(2-phosphooxyethyl)-thiazole + ADP + H(+). Its pathway is cofactor biosynthesis; thiamine diphosphate biosynthesis; 4-methyl-5-(2-phosphoethyl)-thiazole from 5-(2-hydroxyethyl)-4-methylthiazole: step 1/1. In terms of biological role, catalyzes the phosphorylation of the hydroxyl group of 4-methyl-5-beta-hydroxyethylthiazole (THZ). This Natranaerobius thermophilus (strain ATCC BAA-1301 / DSM 18059 / JW/NM-WN-LF) protein is Hydroxyethylthiazole kinase.